We begin with the raw amino-acid sequence, 198 residues long: Prostamide/prostaglandin F synthase (198 aa).

Y108 is modified (phosphotyrosine).

Belongs to the peroxiredoxin-like PRXL2 family. Prostamide/prostaglandin F synthase subfamily.

The protein localises to the cytoplasm. The protein resides in the cytosol. The enzyme catalyses prostaglandin H2 + [thioredoxin]-dithiol = prostaglandin F2alpha + [thioredoxin]-disulfide. It catalyses the reaction prostamide F2alpha + [thioredoxin]-disulfide = prostamide H2 + [thioredoxin]-dithiol. Functionally, catalyzes the reduction of prostaglandin-ethanolamide H(2) (prostamide H(2)) to prostamide F(2alpha) with NADPH as proton donor. Also able to reduce prostaglandin H(2) to prostaglandin F(2alpha). The sequence is that of Prostamide/prostaglandin F synthase (PRXL2B) from Pongo abelii (Sumatran orangutan).